The sequence spans 188 residues: Adenylate kinase (188 aa).

Residue 10–15 (GCGKGT) coordinates ATP. The segment at 30–59 (STGDMLRHARAAGTELGRRVAAIMDGGNLV) is NMP. AMP contacts are provided by residues Thr31, Arg36, 57-59 (NLV), 85-88 (GFPR), and Gln92. Residues 126–136 (KRAEEEGRPDD) form an LID region. Arg127 is an ATP binding site. Arg133 and Arg144 together coordinate AMP. Gly172 serves as a coordination point for ATP.

It belongs to the adenylate kinase family. As to quaternary structure, monomer.

The protein resides in the cytoplasm. It catalyses the reaction AMP + ATP = 2 ADP. Its pathway is purine metabolism; AMP biosynthesis via salvage pathway; AMP from ADP: step 1/1. In terms of biological role, catalyzes the reversible transfer of the terminal phosphate group between ATP and AMP. Plays an important role in cellular energy homeostasis and in adenine nucleotide metabolism. This is Adenylate kinase from Maricaulis maris (strain MCS10) (Caulobacter maris).